The chain runs to 129 residues: MASFGERMSRAYWTMSMGMECYKASTSSESCQRRGVRDDTGTQPHGLVRPIPPEMPTTAHHRPVVVEGDRGPPRRPEKEPSTTTTKKKGPPTAATRTTSKKIVKNKASMDLAGTEKELEDECSFLFLEM.

Positions 23–101 are disordered; it reads KASTSSESCQ…TAATRTTSKK (79 aa). 2 stretches are compositionally biased toward basic and acidic residues: residues 31–40 and 67–80; these read CQRRGVRDDT and EGDR…EKEP.

This is an uncharacterized protein from Ictaluridae (bullhead catfishes).